Consider the following 176-residue polypeptide: Shikimate kinase (176 aa).

10–15 (TSGKSS) lines the ATP pocket. Ser-14 is a binding site for Mg(2+). Residues Asp-32, Gly-81, and Arg-138 each contribute to the substrate site.

This sequence belongs to the shikimate kinase family. As to quaternary structure, monomer. Requires Mg(2+) as cofactor.

The protein resides in the cytoplasm. The catalysed reaction is shikimate + ATP = 3-phosphoshikimate + ADP + H(+). The protein operates within metabolic intermediate biosynthesis; chorismate biosynthesis; chorismate from D-erythrose 4-phosphate and phosphoenolpyruvate: step 5/7. Functionally, catalyzes the specific phosphorylation of the 3-hydroxyl group of shikimic acid using ATP as a cosubstrate. In Chlamydia pneumoniae (Chlamydophila pneumoniae), this protein is Shikimate kinase.